The chain runs to 374 residues: Very late expression factor 1 (374 aa).

The Tyr recombinase domain occupies 169–349 (AIDTILNFID…NFDESSSDEE (181 aa)). Active-site residues include arginine 210, lysine 239, arginine 303, and histidine 326. The disordered stretch occupies residues 328 to 374 (SPASTKPYLNKYNFDESSSDEESGGNNRDSSTGSSANSSSLYYQTGD). Residue tyrosine 335 is the O-(3'-phospho-DNA)-tyrosine intermediate of the active site. The span at 357 to 367 (SSTGSSANSSS) shows a compositional bias: low complexity.

Belongs to the 'phage' integrase family.

Its function is as follows. Involved in very late gene activation. The sequence is that of Very late expression factor 1 (VLF-1) from Orgyia pseudotsugata (Douglas-fir tussock moth).